We begin with the raw amino-acid sequence, 403 residues long: Tyrosine--tRNA ligase (403 aa).

Residues Pro-42–His-51 carry the 'HIGH' region motif. The 'KMSKS' region motif lies at Lys-226–Ser-230. Residue Lys-229 participates in ATP binding. The S4 RNA-binding domain maps to Leu-339–Leu-400.

Belongs to the class-I aminoacyl-tRNA synthetase family. TyrS type 2 subfamily. As to quaternary structure, homodimer.

The protein resides in the cytoplasm. It catalyses the reaction tRNA(Tyr) + L-tyrosine + ATP = L-tyrosyl-tRNA(Tyr) + AMP + diphosphate + H(+). Functionally, catalyzes the attachment of tyrosine to tRNA(Tyr) in a two-step reaction: tyrosine is first activated by ATP to form Tyr-AMP and then transferred to the acceptor end of tRNA(Tyr). This is Tyrosine--tRNA ligase from Xanthomonas axonopodis pv. citri (strain 306).